A 260-amino-acid chain; its full sequence is 3-methyl-2-oxobutanoate hydroxymethyltransferase (260 aa).

Mg(2+) contacts are provided by Asp44 and Asp83. 3-methyl-2-oxobutanoate-binding positions include 44-45, Asp83, and Lys113; that span reads DS. Glu115 lines the Mg(2+) pocket. Catalysis depends on Glu183, which acts as the Proton acceptor.

The protein belongs to the PanB family. Homodecamer; pentamer of dimers. Requires Mg(2+) as cofactor.

The protein resides in the cytoplasm. It catalyses the reaction 3-methyl-2-oxobutanoate + (6R)-5,10-methylene-5,6,7,8-tetrahydrofolate + H2O = 2-dehydropantoate + (6S)-5,6,7,8-tetrahydrofolate. It participates in cofactor biosynthesis; (R)-pantothenate biosynthesis; (R)-pantoate from 3-methyl-2-oxobutanoate: step 1/2. Its function is as follows. Catalyzes the reversible reaction in which hydroxymethyl group from 5,10-methylenetetrahydrofolate is transferred onto alpha-ketoisovalerate to form ketopantoate. The polypeptide is 3-methyl-2-oxobutanoate hydroxymethyltransferase (Gloeobacter violaceus (strain ATCC 29082 / PCC 7421)).